The sequence spans 152 residues: MSSDWDTNTVIGQRVRTGGSGPRQQVARTQGQINAARRAGLVLSVDKKYASSNTKANNEGQRLTMVDRETDIVKPKKLDPSVGRAIAKGRGDKGMTQKDLATRINEKPTVINDYEAGRAIPNQQILAKMERALGVKLRGKGIGEPLGGPKKK.

Polar residues-rich tracts occupy residues 1 to 11 (MSSDWDTNTVI) and 22 to 32 (PRQQVARTQGQ). The interval 1–32 (MSSDWDTNTVIGQRVRTGGSGPRQQVARTQGQ) is disordered. Residues 86-140 (IAKGRGDKGMTQKDLATRINEKPTVINDYEAGRAIPNQQILAKMERALGVKLRGK) form the HTH cro/C1-type domain. The H-T-H motif DNA-binding region spans 97 to 116 (QKDLATRINEKPTVINDYEA).

Belongs to the MBF1 family.

In terms of biological role, transcriptional coactivator that stimulates GCN4-dependent transcriptional activity by bridging the DNA-binding region of GCN4 and TBP (SPT15), thereby recruiting TBP to GCN4-bound promoters. Involved in induction of the ribosome quality control (RQC) pathway; a pathway that degrades nascent peptide chains during problematic translation. Required to prevent stalled ribosomes from frameshifting. The sequence is that of Multiprotein-bridging factor 1 (MBF1) from Eremothecium gossypii (strain ATCC 10895 / CBS 109.51 / FGSC 9923 / NRRL Y-1056) (Yeast).